Consider the following 247-residue polypeptide: ATP synthase subunit a, chloroplastic (247 aa).

A run of 5 helical transmembrane segments spans residues 38 to 58, 95 to 115, 134 to 154, 199 to 219, and 220 to 240; these read QVLITSWVVITILLGSVVIAV, VPFIGTMFLFIFVSNWSGALL, INTTVALALLTSAAYFYAGLS, LVVVVLVSLVPLVVPIPVMFL, and GLFTSGIQALIFATLAAAYIG.

Belongs to the ATPase A chain family. In terms of assembly, F-type ATPases have 2 components, CF(1) - the catalytic core - and CF(0) - the membrane proton channel. CF(1) has five subunits: alpha(3), beta(3), gamma(1), delta(1), epsilon(1). CF(0) has four main subunits: a, b, b' and c.

Its subcellular location is the plastid. It is found in the chloroplast thylakoid membrane. In terms of biological role, key component of the proton channel; it plays a direct role in the translocation of protons across the membrane. The sequence is that of ATP synthase subunit a, chloroplastic from Lolium perenne (Perennial ryegrass).